We begin with the raw amino-acid sequence, 504 residues long: Diacylglycerol O-acyltransferase 1B (504 aa).

Positions 1–72 are disordered; sequence MAISDEPESV…VNSQQQNEKQ (72 aa). Positions 24 to 41 are enriched in polar residues; sequence SATSTAGLFNSPETTTDS. Positions 53–65 are enriched in low complexity; that stretch reads DDSINSDDAAVNS. The next 7 membrane-spanning stretches (helical) occupy residues 108–128, 152–172, 184–204, 209–229, 259–279, 301–321, and 348–368; these read HAGL…RLII, WPLF…FIVE, VVVV…VLVI, SAFV…LKLV, YPYN…TLCY, LIIF…PIVQ, and VWLC…AELL. Positions 375-381 match the FYXDWWN motif motif; sequence FYKDWWN. Helical transmembrane passes span 416 to 436, 438 to 458, and 471 to 491; these read AAAL…CIAV, CHIF…LVLI, and VGNM…CVLL. Residue histidine 430 is part of the active site.

This sequence belongs to the membrane-bound acyltransferase family. Sterol o-acyltransferase subfamily. Highly expressed in flowers and pods. Expressed at low levels in roots, stems and leaves.

The protein resides in the endoplasmic reticulum membrane. It catalyses the reaction an acyl-CoA + a 1,2-diacyl-sn-glycerol = a triacyl-sn-glycerol + CoA. It participates in glycerolipid metabolism; triacylglycerol biosynthesis. In terms of biological role, major contributors to triacylglycerol (TAG) synthesis and oil accumulation in developing seeds. Catalyzes the acylation of the sn-3 hydroxy group of sn-1,2-diacylglycerol using acyl-CoA. Has a marked preference for oleoyl-CoA and sn-1,2-dioleoylglycerol over vernoloyl-CoA and sn-1,2-divernoloylglycerol. The chain is Diacylglycerol O-acyltransferase 1B from Glycine max (Soybean).